A 238-amino-acid chain; its full sequence is Lactate utilization protein A (238 aa).

Belongs to the LutA/YkgE family.

Is involved in L-lactate degradation and allows cells to grow with lactate as the sole carbon source. In Bacillus velezensis (strain DSM 23117 / BGSC 10A6 / LMG 26770 / FZB42) (Bacillus amyloliquefaciens subsp. plantarum), this protein is Lactate utilization protein A.